Reading from the N-terminus, the 352-residue chain is MSKQPSLSYKDAGVDIDAGEALVERIKSVAKRTKRPEVMGGLGGFGALCEIPAGYKQPVLVSGTDGVGTKLRLALNLNKHDTIGIDLVAMCVNDLVVCGAEPLFFLDYYATGKLNVDTAAQVVTGIGAGCELAGCSLVGGETAEMPGMYEGEDYDLAGFCVGVVEKAEIIDGSKVAAGDALLALPSSGPHSNGYSLIRKIIEVAGADIENIQLDGKPLTELLMAPTRIYVKPLLKLIKETGAVKAMAHITGGGLLDNIPRVLPEGAQAVVDVASWQRPAVFDWLQQQGNVEENEMHRVLNCGVGMVICVAQEHVDAALNVLREAGEQPWVIGQIATAAEGAAQVELKNLKAH.

This sequence belongs to the AIR synthase family.

It localises to the cytoplasm. The catalysed reaction is 2-formamido-N(1)-(5-O-phospho-beta-D-ribosyl)acetamidine + ATP = 5-amino-1-(5-phospho-beta-D-ribosyl)imidazole + ADP + phosphate + H(+). Its pathway is purine metabolism; IMP biosynthesis via de novo pathway; 5-amino-1-(5-phospho-D-ribosyl)imidazole from N(2)-formyl-N(1)-(5-phospho-D-ribosyl)glycinamide: step 2/2. The chain is Phosphoribosylformylglycinamidine cyclo-ligase from Pseudomonas syringae pv. tomato (strain ATCC BAA-871 / DC3000).